A 129-amino-acid polypeptide reads, in one-letter code: Large ribosomal subunit protein bL20 (129 aa).

It belongs to the bacterial ribosomal protein bL20 family.

Functionally, binds directly to 23S ribosomal RNA and is necessary for the in vitro assembly process of the 50S ribosomal subunit. It is not involved in the protein synthesizing functions of that subunit. The chain is Large ribosomal subunit protein bL20 from Mycobacterium sp. (strain JLS).